A 218-amino-acid chain; its full sequence is Uracil-DNA glycosylase (218 aa).

Residue aspartate 60 is the Proton acceptor of the active site.

This sequence belongs to the uracil-DNA glycosylase (UDG) superfamily. UNG family.

The protein resides in the cytoplasm. It catalyses the reaction Hydrolyzes single-stranded DNA or mismatched double-stranded DNA and polynucleotides, releasing free uracil.. Its function is as follows. Excises uracil residues from the DNA which can arise as a result of misincorporation of dUMP residues by DNA polymerase or due to deamination of cytosine. The polypeptide is Uracil-DNA glycosylase (Francisella philomiragia subsp. philomiragia (strain ATCC 25017 / CCUG 19701 / FSC 153 / O#319-036)).